The sequence spans 190 residues: Protein PLANT CADMIUM RESISTANCE 8 (190 aa).

A disordered region spans residues 1-31 (MGRVTTPSEEDSNNGLPVQQPGTPNQRTRVP). Residues 13–28 (NNGLPVQQPGTPNQRT) are compositionally biased toward polar residues. The residue at position 23 (Thr-23) is a Phosphothreonine. A helical transmembrane segment spans residues 94–113 (LGTFMYLLMMPALCSHWVMG).

It belongs to the cornifelin family.

It localises to the cell membrane. Functionally, may be involved in heavy metals transport. The polypeptide is Protein PLANT CADMIUM RESISTANCE 8 (PCR8) (Arabidopsis thaliana (Mouse-ear cress)).